Consider the following 265-residue polypeptide: Ubiquinone biosynthesis protein COQ4 homolog, mitochondrial (265 aa).

Residues 1-30 constitute a mitochondrion transit peptide; the sequence is MMQRSWQSWRRGLTLGLASRRSYVASVEAP. Histidine 170, aspartate 171, histidine 174, and glutamate 186 together coordinate Zn(2+).

Belongs to the COQ4 family. Component of a multi-subunit COQ enzyme complex. Zn(2+) serves as cofactor.

It is found in the mitochondrion inner membrane. It carries out the reaction a 4-hydroxy-3-methoxy-5-(all-trans-polyprenyl)benzoate + H(+) = a 2-methoxy-6-(all-trans-polyprenyl)phenol + CO2. It functions in the pathway cofactor biosynthesis; ubiquinone biosynthesis. Lyase that catalyzes the C1-decarboxylation of 4-hydroxy-3-methoxy-5-(all-trans-polyprenyl)benzoic acid into 2-methoxy-6-(all-trans-polyprenyl)phenol during ubiquinone biosynthesis. This Drosophila virilis (Fruit fly) protein is Ubiquinone biosynthesis protein COQ4 homolog, mitochondrial.